A 299-amino-acid chain; its full sequence is GTPase Era (299 aa).

Residues 5–175 (RSGFVCLVGR…IDVLAAALPP (171 aa)) form the Era-type G domain. A G1 region spans residues 13-20 (GRPNTGKS). 13–20 (GRPNTGKS) is a GTP binding site. Positions 39 to 43 (QTTRH) are G2. The interval 60–63 (DTPG) is G3. Residues 60–64 (DTPGL) and 124–127 (TKID) each bind GTP. Residues 124–127 (TKID) form a G4 region. Residues 154-156 (VSA) are G5. One can recognise a KH type-2 domain in the interval 206-285 (VRDELPHSLA…YLDLRVKVAK (80 aa)).

Belongs to the TRAFAC class TrmE-Era-EngA-EngB-Septin-like GTPase superfamily. Era GTPase family. Monomer.

It is found in the cell envelope. Its subcellular location is the secreted. The protein localises to the cell wall. Functionally, exhibits GTPase activity. Binds RNA but is probably not involved in ribosome assembly in mycobacteria. The polypeptide is GTPase Era (Mycobacterium avium (strain 104)).